We begin with the raw amino-acid sequence, 258 residues long: Synaptosomal-associated protein 29 (258 aa).

Residues 1–43 (MSAYPRSYNPFDEDAEDEDARPAPWSDSRDLADGPGAPADRQQ) form a disordered region. Phosphoserine occurs at positions 65, 77, and 114. Residues 76-107 (VSAEELVRQRGALERTEKMVDKMEQDLKTSQK) are a coiled coil. 2 disordered regions span residues 127-147 (PAETPSAQNGTLTPQPSGRLK) and 161-188 (QASHPNLRKLQDSDSIPGGAGSAVSSEA). Phosphothreonine occurs at positions 130 and 137. Residues 131–142 (PSAQNGTLTPQP) show a composition bias toward polar residues. Serine 163, serine 182, serine 185, serine 204, and serine 210 each carry phosphoserine. One can recognise a t-SNARE coiled-coil homology domain in the interval 196–258 (RACHQRIDSN…TSTERKVRQL (63 aa)).

It belongs to the SNAP-25 family. As to quaternary structure, forms a SNARE complex, composed of VAMP8, SNAP29 and STX17, involved in fusion of autophagosome with lysosome. Interacts with multiple syntaxins including STX6. Interacts with EIPR1. Interacts with STX17; this interaction is increased in the absence of TMEM39A.

It localises to the cytoplasm. The protein resides in the golgi apparatus membrane. Its subcellular location is the cytoplasmic vesicle. It is found in the autophagosome membrane. The protein localises to the cell projection. It localises to the cilium membrane. In terms of biological role, SNAREs, soluble N-ethylmaleimide-sensitive factor-attachment protein receptors, are essential proteins for fusion of cellular membranes. SNAREs localized on opposing membranes assemble to form a trans-SNARE complex, an extended, parallel four alpha-helical bundle that drives membrane fusion. SNAP29 is a SNARE involved in autophagy through the direct control of autophagosome membrane fusion with the lysososome membrane. Also plays a role in ciliogenesis by regulating membrane fusions. The polypeptide is Synaptosomal-associated protein 29 (Bos taurus (Bovine)).